The sequence spans 108 residues: ATP-dependent Clp protease adapter protein ClpS (108 aa).

It belongs to the ClpS family. In terms of assembly, binds to the N-terminal domain of the chaperone ClpA.

Involved in the modulation of the specificity of the ClpAP-mediated ATP-dependent protein degradation. The polypeptide is ATP-dependent Clp protease adapter protein ClpS (Ralstonia pickettii (strain 12J)).